The following is a 289-amino-acid chain: uncharacterized protein (289 aa).

A run of 10 helical transmembrane segments spans residues 7–27 (LLLA…KIGL), 33–53 (FNLA…WVFW), 65–85 (WLHL…FQFL), 92–112 (ATNA…WGLV), 123–143 (GVFL…LEFF), 148–168 (IFGD…TVLG), 182–202 (AYAF…SGFA), 212–232 (VAAL…VWYY), 241–261 (SVAV…FYAL), and 265–285 (PDFF…LTTA). EamA domains are found at residues 14–136 (LIWA…LIVS) and 159–285 (FLWA…LTTA).

It belongs to the EamA transporter family.

It is found in the cell membrane. This is an uncharacterized protein from Archaeoglobus fulgidus (strain ATCC 49558 / DSM 4304 / JCM 9628 / NBRC 100126 / VC-16).